An 86-amino-acid polypeptide reads, in one-letter code: Small ribosomal subunit protein bS20 (86 aa).

The tract at residues 1-25 is disordered; it reads MANIKSQQKRNRTNERARLRNKAVK.

The protein belongs to the bacterial ribosomal protein bS20 family.

Functionally, binds directly to 16S ribosomal RNA. This is Small ribosomal subunit protein bS20 from Mycobacterium bovis (strain ATCC BAA-935 / AF2122/97).